We begin with the raw amino-acid sequence, 119 residues long: Large ribosomal subunit protein bL20 (119 aa).

Belongs to the bacterial ribosomal protein bL20 family.

Binds directly to 23S ribosomal RNA and is necessary for the in vitro assembly process of the 50S ribosomal subunit. It is not involved in the protein synthesizing functions of that subunit. The sequence is that of Large ribosomal subunit protein bL20 from Dichelobacter nodosus (strain VCS1703A).